Reading from the N-terminus, the 403-residue chain is Cytoplasmic tRNA 2-thiolation protein 2 (403 aa).

The protein belongs to the CTU2/NCS2 family.

The protein localises to the cytoplasm. The protein operates within tRNA modification; 5-methoxycarbonylmethyl-2-thiouridine-tRNA biosynthesis. Plays a central role in 2-thiolation of mcm(5)S(2)U at tRNA wobble positions of tRNA(Lys), tRNA(Glu) and tRNA(Gln). May act by forming a heterodimer with NCS6/CTU1 that ligates sulfur from thiocarboxylated URM1 onto the uridine of tRNAs at wobble position. This is Cytoplasmic tRNA 2-thiolation protein 2 from Drosophila ananassae (Fruit fly).